A 433-amino-acid polypeptide reads, in one-letter code: D-amino acid dehydrogenase (433 aa).

3–17 is a binding site for FAD; sequence VLVLGSGVIGTTSAY.

This sequence belongs to the DadA oxidoreductase family. FAD is required as a cofactor.

The enzyme catalyses a D-alpha-amino acid + A + H2O = a 2-oxocarboxylate + AH2 + NH4(+). The protein operates within amino-acid degradation; D-alanine degradation; NH(3) and pyruvate from D-alanine: step 1/1. Oxidative deamination of D-amino acids. This chain is D-amino acid dehydrogenase, found in Pseudomonas savastanoi pv. phaseolicola (strain 1448A / Race 6) (Pseudomonas syringae pv. phaseolicola (strain 1448A / Race 6)).